A 524-amino-acid polypeptide reads, in one-letter code: MTACSTAIRAQQLLLPVLSALGLLAAGAPQPPNIVLLLMDDMGWGDLGVYGEPSRETPNLDRMAAEGMLFPSFYSANPLCSPSRAALLTGRLPIRNGFYTTNAHARNAYTPQEIMGGIPNSEHLLPELLKKAGYTNKIVGKWHLGHRPQFHPLKHGFDEWFGSPNCHFGPYDNKVKPNIPVYRDWEMVGRFYEEFPINLKTGEANLTQLYLQEALDFIRTQHARQSPFFLYWAIDATHAPVYASKQFLGTSLRGRYGDAVREIDDSVGKILSLLQNLGISKNTFVFFTSDNGAALISAPKEGGSNGPFLCGKQTTFEGGMREPAIAWWPGHIAAGQVSHQLGSIMDLFTTSLSLAGLKPPSDRVIDGLDLLPTMLQGHIIDRPIFYYRGNTLMAVTLGQYKAHLWTWTNSWEEFRQGIDFCPGQNVSGVTTHTQEEHTELPLIFHLGRDPGERFPLRFTSNEYQDALSRTTQVIQQHQKSLVPGQPQLNVCNQAVMNWAPPGCEKLGKCLTPPESVPEKCFWAH.

The first 27 residues, 1–27, serve as a signal peptide directing secretion; it reads MTACSTAIRAQQLLLPVLSALGLLAAG. The segment at 28 to 381 is catalytic domain; the sequence is APQPPNIVLL…PTMLQGHIID (354 aa). Residues D40, D41, and C80 each contribute to the Ca(2+) site. The active-site Nucleophile is C80. The residue at position 80 (C80) is a 3-oxoalanine (Cys). H143 is an active-site residue. N205 is a glycosylation site (N-linked (GlcNAc...) asparagine). Ca(2+)-binding residues include D290 and N291. A disulfide bond links C310 and C421. N-linked (GlcNAc...) asparagine glycosylation occurs at N425. Intrachain disulfides connect C491–C520 and C503–C509.

The protein belongs to the sulfatase family. As to quaternary structure, homodimer. The cofactor is Ca(2+). Post-translationally, the conversion to 3-oxoalanine (also known as C-formylglycine, FGly), of a serine or cysteine residue in prokaryotes and of a cysteine residue in eukaryotes, is critical for catalytic activity.

The protein localises to the lysosome. It catalyses the reaction Hydrolysis of the 6-sulfate groups of the N-acetyl-D-galactosamine 6-sulfate units of chondroitin sulfate and of the D-galactose 6-sulfate units of keratan sulfate.. The polypeptide is N-acetylgalactosamine-6-sulfatase (Galns) (Rattus norvegicus (Rat)).